Reading from the N-terminus, the 261-residue chain is CD40 ligand (261 aa).

The Cytoplasmic segment spans residues 1–22; that stretch reads MIETYNQPSPRSAATGLPVRMK. The chain crosses the membrane as a helical; Signal-anchor for type II membrane protein span at residues 23 to 43; it reads IFMYLLTIFLITQMIGSALFA. At 44–261 the chain is on the extracellular side; that stretch reads VYLHRRLDKI…GFTSFGLLKL (218 aa). The 140-residue stretch at 122–261 folds into the THD domain; that stretch reads IAAHVISEAS…GFTSFGLLKL (140 aa). Cysteine 178 and cysteine 218 are disulfide-bonded. An N-linked (GlcNAc...) asparagine glycan is attached at asparagine 240.

It belongs to the tumor necrosis factor family. In terms of assembly, homotrimer. Interacts with CD28. CD40 ligand, soluble form: Exists as either a monomer or a homotrimer. Forms a ternary complex between CD40 and integrins for CD40-CD40LG signaling. In terms of processing, the soluble form derives from the membrane form by proteolytic processing.

Its subcellular location is the cell membrane. The protein resides in the cell surface. It is found in the secreted. In terms of biological role, cytokine that acts as a ligand to CD40/TNFRSF5. Costimulates T-cell proliferation and cytokine production. Its cross-linking on T-cells generates a costimulatory signal which enhances the production of IL4 and IL10 in conjunction with the TCR/CD3 ligation and CD28 costimulation. Induces the activation of NF-kappa-B. Induces the activation of kinases MAPK8 and PAK2 in T-cells. Mediates B-cell proliferation in the absence of co-stimulus as well as IgE production in the presence of IL4. Involved in immunoglobulin class switching. Acts as a ligand for integrins, specifically ITGA5:ITGB1 and ITGAV:ITGB3; both integrins and the CD40 receptor are required for activation of CD40-CD40LG signaling, which have cell-type dependent effects, such as B-cell activation, NF-kappa-B signaling and anti-apoptotic signaling. The protein is CD40 ligand (CD40LG) of Cercocebus atys (Sooty mangabey).